The primary structure comprises 1136 residues: Receptor-type guanylate cyclase gcy-4 (1136 aa).

An N-terminal signal peptide occupies residues 1–21; sequence MRQLNYYIFISTILTYNLTHG. Residues 22 to 485 lie on the Extracellular side of the membrane; that stretch reads QGPRPVIRVG…CPLPIFEQYR (464 aa). Asparagine 40, asparagine 194, asparagine 252, asparagine 351, asparagine 377, asparagine 386, and asparagine 438 each carry an N-linked (GlcNAc...) asparagine glycan. Residues 486–506 form a helical membrane-spanning segment; that stretch reads ALVIVAIAVTILILLAIIICM. Residues 507–1136 lie on the Cytoplasmic side of the membrane; the sequence is SSKIRNRRVE…LRREMMRVEV (630 aa). A Protein kinase domain is found at 533 to 833; sequence LPMHRRASKS…EDNLMDHVFS (301 aa). The tract at residues 536-565 is disordered; sequence HRRASKSSQESETESASETENFTSKSGDTM. The Guanylate cyclase domain maps to 891-1021; the sequence is TVFFSDLVKF…DTVNTASRME (131 aa).

This sequence belongs to the adenylyl cyclase class-4/guanylyl cyclase family. As to expression, expression is biased toward ASE right (ASER) sensory neuron.

The protein resides in the cell membrane. It catalyses the reaction GTP = 3',5'-cyclic GMP + diphosphate. In terms of biological role, guanylate cyclase involved in the production of the second messenger cGMP. Regulates chemotaxis responses toward Br(1-) and I(1-) salt ions in ASE right (ASER) sensory neuron. The chain is Receptor-type guanylate cyclase gcy-4 from Caenorhabditis elegans.